Reading from the N-terminus, the 423-residue chain is vacuole-related protein 17 (423 aa).

N-acetylalanine is present on alanine 2. A disordered region spans residues 109 to 134 (ATVPNEAPNDSPQSQSTRSSLGSFQP). The tract at residues 110-170 (TVPNEAPNDS…NPINEVDCPS (61 aa)) is MYO2-binding. Polar residues predominate over residues 116–131 (PNDSPQSQSTRSSLGS). At serine 119 the chain carries Phosphoserine. Threonine 149 is modified (phosphothreonine). Residues 150 to 211 (PSKPPKKSVG…SKKPSSSDTY (62 aa)) form a disordered region. The residue at position 178 (serine 178) is a Phosphoserine. Basic residues predominate over residues 182 to 192 (QPARNRTLRAA). Residues 199–211 (LNKSKKPSSSDTY) are compositionally biased toward polar residues. Phosphothreonine is present on threonine 248. Position 269 is a phosphoserine (serine 269). The segment at 290–380 (SASFFRPSNP…ISESFQSKRG (91 aa)) is VAC8-binding.

Belongs to the VAC17 family. In terms of assembly, interacts with MYO2 and VAC8. Interacts with ATG18.

Its subcellular location is the vacuole membrane. In terms of biological role, vacuole-specific MYO2 receptor required for vacuole inheritance. Binds simultaneously to MYO2 and to VAC8, a vacuolar membrane protein, forming a transport complex which moves the attached vacuole membrane along actin cables into the bud. Once the vacuole arrives in the bud, VAC17 is degraded, depositing the vacuole in its correct location. In Saccharomyces cerevisiae (strain ATCC 204508 / S288c) (Baker's yeast), this protein is vacuole-related protein 17 (VAC17).